We begin with the raw amino-acid sequence, 123 residues long: Large ribosomal subunit protein uL29y (123 aa).

Belongs to the universal ribosomal protein uL29 family.

This Arabidopsis thaliana (Mouse-ear cress) protein is Large ribosomal subunit protein uL29y (RPL35B).